A 139-amino-acid chain; its full sequence is Transcription antitermination protein NusB (139 aa).

Belongs to the NusB family.

Involved in transcription antitermination. Required for transcription of ribosomal RNA (rRNA) genes. Binds specifically to the boxA antiterminator sequence of the ribosomal RNA (rrn) operons. The sequence is that of Transcription antitermination protein NusB from Klebsiella pneumoniae (strain 342).